We begin with the raw amino-acid sequence, 222 residues long: Protein-L-isoaspartate O-methyltransferase (222 aa).

The active site involves Ser-68.

It belongs to the methyltransferase superfamily. L-isoaspartyl/D-aspartyl protein methyltransferase family.

It is found in the cytoplasm. It carries out the reaction [protein]-L-isoaspartate + S-adenosyl-L-methionine = [protein]-L-isoaspartate alpha-methyl ester + S-adenosyl-L-homocysteine. Its function is as follows. Catalyzes the methyl esterification of L-isoaspartyl residues in peptides and proteins that result from spontaneous decomposition of normal L-aspartyl and L-asparaginyl residues. It plays a role in the repair and/or degradation of damaged proteins. The chain is Protein-L-isoaspartate O-methyltransferase from Koribacter versatilis (strain Ellin345).